Here is a 358-residue protein sequence, read N- to C-terminus: MSNIQENENKETCNIKENENKEILKENFKNKEKQYFSSLRSPYSACRSVDCFKKLYTINEGAFGVVYCAQDKETEEIVALKKIKMEREREGIPITSVREIKVLMELKHDNIVQIKEIVLGKNINSIFMAMEFIDHDLRGLMEVIKKPFLPSEIKTLIQQLLNGVSYMHDNWVIHRDLKTANLLYTNKGVLKIADFGLAREYGSPLKPLSKGVVTLWYRAPELLLDTEIYTPAIDIWSVGCIFAEIISKEVLLQGSSEIDQMDKIFKLFGTPTEKSWPAFFKLPLAKYFNLTDQPYNNLKSKFPHITDNAFDLLNKLLELNPEARISASDALKHPYFFENPQPRDPLLMPTWPSSHKKT.

Positions 52–336 (FKKLYTINEG…ASDALKHPYF (285 aa)) constitute a Protein kinase domain. Residues 58–66 (INEGAFGVV) and K81 contribute to the ATP site. D176 functions as the Proton acceptor in the catalytic mechanism.

The protein belongs to the protein kinase superfamily. CMGC Ser/Thr protein kinase family. CDC2/CDKX subfamily.

The enzyme catalyses L-seryl-[protein] + ATP = O-phospho-L-seryl-[protein] + ADP + H(+). It carries out the reaction L-threonyl-[protein] + ATP = O-phospho-L-threonyl-[protein] + ADP + H(+). The chain is Cyclin-dependent kinase 11 (cdk11) from Dictyostelium discoideum (Social amoeba).